Consider the following 732-residue polypeptide: Inducible ornithine decarboxylase (732 aa).

At Lys355 the chain carries N6-(pyridoxal phosphate)lysine.

This sequence belongs to the Orn/Lys/Arg decarboxylase class-I family. Pyridoxal 5'-phosphate serves as cofactor.

It catalyses the reaction L-ornithine + H(+) = putrescine + CO2. Its pathway is amine and polyamine biosynthesis; putrescine biosynthesis via L-ornithine pathway; putrescine from L-ornithine: step 1/1. Functionally, the first enzyme leading to putrescine and thus polyamine synthesis. The sequence is that of Inducible ornithine decarboxylase from Escherichia coli (strain K12).